An 833-amino-acid chain; its full sequence is Leucine--tRNA ligase (833 aa).

The short motif at 41-52 (PYPSGAGLHVGH) is the 'HIGH' region element. A 'KMSKS' region motif is present at residues 610–614 (KMSKS). ATP is bound at residue Lys613.

This sequence belongs to the class-I aminoacyl-tRNA synthetase family.

The protein localises to the cytoplasm. The catalysed reaction is tRNA(Leu) + L-leucine + ATP = L-leucyl-tRNA(Leu) + AMP + diphosphate. The chain is Leucine--tRNA ligase from Streptococcus pneumoniae (strain ATCC 700669 / Spain 23F-1).